The chain runs to 3414 residues: Genome polyprotein (3414 aa).

The segment at 1–30 is disordered; that stretch reads MVKKAILKGKGGGPPRRVSKETATKTRQPR. At 1–98 the chain is on the cytoplasmic side; the sequence is MVKKAILKGK…LQKRGKRRSA (98 aa). Residues 97 to 117 constitute a propeptide, ER anchor for the capsid protein C, removed in mature form by serine protease NS3; sequence SATDWMSWLLVITLLGMTIAA. The chain crosses the membrane as a helical span at residues 99–119; that stretch reads TDWMSWLLVITLLGMTIAATV. Topologically, residues 120 to 242 are extracellular; that stretch reads RKERDGSTVI…HLTRVEGWVW (123 aa). Residue N144 is glycosylated (N-linked (GlcNAc...) asparagine; by host). The chain crosses the membrane as a helical span at residues 243-260; it reads KNRLLALAMVTVVWLTLE. S261 is a topological domain (cytoplasmic). A helical transmembrane segment spans residues 262–280; the sequence is VVTRVAVLVVLLCLAPVYA. The Extracellular portion of the chain corresponds to 281 to 727; it reads SRCTHLENRD…HTVLGGAFNS (447 aa). 6 cysteine pairs are disulfide-bonded: C283–C310, C340–C396, C340–C401, C354–C385, C372–C396, and C372–C401. The tract at residues 378-391 is fusion peptide; sequence DRGWGNHCGLFGKG. Residue N434 is glycosylated (N-linked (GlcNAc...) asparagine; by host). Cystine bridges form between C466–C570 and C587–C618. The chain crosses the membrane as a helical span at residues 728 to 748; sequence IFGGVGFLPKLLLGVALAWLG. The Extracellular portion of the chain corresponds to 749–755; that stretch reads LNMRNPT. Residues 756 to 776 traverse the membrane as a helical segment; that stretch reads MSMSFLLAGVLVLAMTLGVGA. Topologically, residues 777 to 1132 are extracellular; the sequence is DVGCAVDTER…RSMVVADNGE (356 aa). 6 disulfides stabilise this stretch: C780–C791, C831–C920, C955–C1000, C1057–C1106, C1068–C1090, and C1089–C1093. N-linked (GlcNAc...) asparagine; by host glycans are attached at residues N861, N983, and N999. A helical transmembrane segment spans residues 1133-1153; that stretch reads LLSEGGVPGIVALFVVLEYII. Topologically, residues 1154–1158 are cytoplasmic; it reads RRRPS. A helical membrane pass occupies residues 1159–1179; sequence TGSTVVWGGIVVLALLVTGMV. Over 1180 to 1187 the chain is Lumenal; it reads RMESLVRY. A helical transmembrane segment spans residues 1188 to 1208; that stretch reads VVAVGITFHLELGPEIVALML. At 1209-1293 the chain is on the cytoplasmic side; it reads LQAVFELRVG…LLMALMTQQD (85 aa). A helical transmembrane segment spans residues 1294–1314; sequence VVTVHHGLVCFLSAASACSIW. Topologically, residues 1315 to 1327 are lumenal; that stretch reads RLLRGHREQKGLT. A helical membrane pass occupies residues 1328–1348; that stretch reads WIVPLARLLGGEGSGIRLLAF. At 1349 to 1359 the chain is on the cytoplasmic side; it reads WELSAHRGRRS. The chain crosses the membrane as a helical span at residues 1360–1377; the sequence is FSEPLTVVGVMLTLASGM. Topologically, residues 1378-1382 are lumenal; it reads MRHTS. The helical transmembrane segment at 1383–1403 threads the bilayer; the sequence is QEALCALAVASFLLLMLVLGT. At 1404 to 1454 the chain is on the cytoplasmic side; it reads RKMQLVAEWSGCVEWHPELVNEGGEVSLRVRQDAMGNFHLTELEKEERMMA. Positions 1410-1449 are interacts with and activates NS3 protease; that stretch reads AEWSGCVEWHPELVNEGGEVSLRVRQDAMGNFHLTELEKE. The helical intramembrane region spans 1455-1475; sequence FWLIAGLAASAIHWSGIIGVM. Residues 1476–2160 are Cytoplasmic-facing; the sequence is GLWTLTKMLR…RMAERDAPEA (685 aa). The Peptidase S7 domain maps to 1490–1669; that stretch reads SDLVFSGQGG…EAEKSRPNLP (180 aa). Residues H1543, D1567, and S1627 each act as charge relay system; for serine protease NS3 activity in the active site. The Helicase ATP-binding domain occupies 1675-1831; that stretch reads TGWTSKGQIT…ESNGAITSEE (157 aa). Position 1688 to 1695 (1688 to 1695) interacts with ATP; sequence MHPGSGKT. The short motif at 1779 to 1782 is the DEAH box element; it reads DEAH. Residues 1841-2000 form the Helicase C-terminal domain; that stretch reads DGFDWITEYE…TLRGPVATFY (160 aa). At K1883 the chain carries N6-acetyllysine; by host. The chain crosses the membrane as a helical span at residues 2161–2181; that stretch reads FLTMVEMMVLGLATLGVIWCF. Topologically, residues 2182-2189 are lumenal; that stretch reads VVRTSISR. Residues 2190–2210 constitute an intramembrane region (helical); sequence MMLGTLVLLASLLLLWAGGVG. Y2211 is a topological domain (lumenal). A helical membrane pass occupies residues 2212–2232; that stretch reads GNMAGVALIFYTLLTVLQPEA. Over 2233–2244 the chain is Cytoplasmic; it reads GKQRSSDDNKLA. A helical membrane pass occupies residues 2245–2265; that stretch reads YFLLTLCSLAGLVAANEMGFL. Residues 2266–2299 are Lumenal-facing; that stretch reads EKTKADLSTVLWSEREEPRPWSEWTNVDIQPARS. The helical intramembrane region spans 2300-2320; the sequence is WGTYVLVVSLFTPYIIHQLQT. Residues 2321 to 2343 are Lumenal-facing; it reads KIQQLVNSAVASGAQAMRDLGGG. The segment at residues 2344-2364 is an intramembrane region (helical); the sequence is APFFGVAGHVMTLGVVSLIGA. Residues 2365 to 2368 lie on the Lumenal side of the membrane; sequence TPTS. A helical membrane pass occupies residues 2369 to 2389; the sequence is LMVGVGLAALHLAIVVSGLEA. At 2390-2432 the chain is on the cytoplasmic side; sequence ELTQRAHKVFFSAMVRNPMVDGDVINPFGEGEAKPALYERRMS. Residues 2433 to 2453 traverse the membrane as a helical segment; sequence LVLAIVLCLMSVVMNRTVASI. At 2454–2477 the chain is on the lumenal side; that stretch reads TEASAVGLAAAGQLLRPEADTLWT. The helical transmembrane segment at 2478-2498 threads the bilayer; sequence MPVACGMSGVVRGSLWGFLPL. Over 2499-3414 the chain is Cytoplasmic; the sequence is GHRLWLRASG…WELRLESSII (916 aa). One can recognise an mRNA cap 0-1 NS5-type MT domain in the interval 2512-2776; sequence GGSEGDTLGD…ELDLGVGTRC (265 aa). An S-adenosyl-L-methionine-binding site is contributed by S2567. Position 2567 is a phosphoserine (S2567). The active-site For 2'-O-MTase activity is K2572. S-adenosyl-L-methionine-binding residues include G2597, W2598, T2615, I2616, D2642, and V2643. D2657 acts as the For 2'-O-MTase activity in catalysis. S-adenosyl-L-methionine is bound at residue I2658. Residues K2694 and E2730 each act as for 2'-O-MTase activity in the active site. Residues 2730-2734 are interaction with host SCRIB; sequence EMYYS. S-adenosyl-L-methionine is bound at residue Y2732. E2950, H2954, C2959, and C2962 together coordinate Zn(2+). The RdRp catalytic domain occupies 3040–3189; the sequence is GLFYADDTAG…RPLDDRFGKA (150 aa). Residues H3224, C3240, and C3359 each coordinate Zn(2+).

It in the N-terminal section; belongs to the class I-like SAM-binding methyltransferase superfamily. mRNA cap 0-1 NS5-type methyltransferase family. Homodimer. Interacts (via N-terminus) with host EXOC1 (via C-terminus); this interaction results in EXOC1 degradation through the proteasome degradation pathway. As to quaternary structure, forms heterodimers with envelope protein E in the endoplasmic reticulum and Golgi. In terms of assembly, homodimer; in the endoplasmic reticulum and Golgi. Interacts with protein prM. Interacts with non-structural protein 1. Homodimer; Homohexamer when secreted. Interacts with envelope protein E. As to quaternary structure, interacts (via N-terminus) with serine protease NS3. In terms of assembly, forms a heterodimer with serine protease NS3. May form homooligomers. Forms a heterodimer with NS2B. Interacts with NS4B. Interacts with unphosphorylated RNA-directed RNA polymerase NS5; this interaction stimulates RNA-directed RNA polymerase NS5 guanylyltransferase activity. As to quaternary structure, interacts with serine protease NS3. In terms of assembly, homodimer. Interacts with host STAT2; this interaction inhibits the phosphorylation of the latter, and, when all viral proteins are present (polyprotein), targets STAT2 for degradation. Interacts with serine protease NS3. Interacts with host SCRIB; this interaction targets NS5 to the cell membrane periphery and nucleus, thereby allowing efficient host nuclear STAT1 inhibition. Specific enzymatic cleavages in vivo yield mature proteins. Cleavages in the lumen of endoplasmic reticulum are performed by host signal peptidase, whereas cleavages in the cytoplasmic side are performed by serine protease NS3. Signal cleavage at the 2K-4B site requires a prior NS3 protease-mediated cleavage at the 4A-2K site. In terms of processing, cleaved in post-Golgi vesicles by a host furin, releasing the mature small envelope protein M, and peptide pr. This cleavage is incomplete as up to 30% of viral particles still carry uncleaved prM. Post-translationally, N-glycosylated. N-glycosylated. The excreted form is glycosylated and this is required for efficient secretion of the protein from infected cells. In terms of processing, acetylated by host KAT5. Acetylation modulates NS3 RNA-binding and unwinding activities and plays an important positive role for viral replication. Post-translationally, phosphorylated on serines residues. This phosphorylation may trigger NS5 nuclear localization.

Its subcellular location is the virion. It is found in the host nucleus. The protein localises to the host cytoplasm. The protein resides in the host perinuclear region. It localises to the secreted. Its subcellular location is the virion membrane. It is found in the host endoplasmic reticulum membrane. The enzyme catalyses Selective hydrolysis of -Xaa-Xaa-|-Yaa- bonds in which each of the Xaa can be either Arg or Lys and Yaa can be either Ser or Ala.. It catalyses the reaction RNA(n) + a ribonucleoside 5'-triphosphate = RNA(n+1) + diphosphate. It carries out the reaction a ribonucleoside 5'-triphosphate + H2O = a ribonucleoside 5'-diphosphate + phosphate + H(+). The catalysed reaction is ATP + H2O = ADP + phosphate + H(+). The enzyme catalyses a 5'-end (5'-triphosphoguanosine)-ribonucleoside in mRNA + S-adenosyl-L-methionine = a 5'-end (N(7)-methyl 5'-triphosphoguanosine)-ribonucleoside in mRNA + S-adenosyl-L-homocysteine. It catalyses the reaction a 5'-end (N(7)-methyl 5'-triphosphoguanosine)-ribonucleoside in mRNA + S-adenosyl-L-methionine = a 5'-end (N(7)-methyl 5'-triphosphoguanosine)-(2'-O-methyl-ribonucleoside) in mRNA + S-adenosyl-L-homocysteine + H(+). Functionally, plays a role in virus budding by binding to the cell membrane and gathering the viral RNA into a nucleocapsid that forms the core of a mature virus particle. During virus entry, may induce genome penetration into the host cytoplasm after hemifusion induced by the surface proteins. Can migrate to the cell nucleus where it modulates host functions. Its function is as follows. Inhibits RNA silencing by interfering with host Dicer. Prevents premature fusion activity of envelope proteins in trans-Golgi by binding to envelope protein E at pH6.0. After virion release in extracellular space, gets dissociated from E dimers. In terms of biological role, acts as a chaperone for envelope protein E during intracellular virion assembly by masking and inactivating envelope protein E fusion peptide. prM is the only viral peptide matured by host furin in the trans-Golgi network probably to avoid catastrophic activation of the viral fusion activity in acidic Golgi compartment prior to virion release. prM-E cleavage is inefficient, and many virions are only partially matured. These uncleaved prM would play a role in immune evasion. Functionally, may play a role in virus budding. Exerts cytotoxic effects by activating a mitochondrial apoptotic pathway through M ectodomain. May display a viroporin activity. Its function is as follows. Binds to host cell surface receptor and mediates fusion between viral and cellular membranes. Envelope protein is synthesized in the endoplasmic reticulum in the form of heterodimer with protein prM. They play a role in virion budding in the ER, and the newly formed immature particle is covered with 60 spikes composed of heterodimer between precursor prM and envelope protein E. The virion is transported to the Golgi apparatus where the low pH causes dissociation of PrM-E heterodimers and formation of E homodimers. prM-E cleavage is inefficient, and many virions are only partially matured. These uncleaved prM would play a role in immune evasion. Involved in immune evasion, pathogenesis and viral replication. Once cleaved off the polyprotein, is targeted to three destinations: the viral replication cycle, the plasma membrane and the extracellular compartment. Essential for viral replication. Required for formation of the replication complex and recruitment of other non-structural proteins to the ER-derived membrane structures. Excreted as a hexameric lipoparticle that plays a role against host immune response. Antagonizing the complement function. Binds to the host macrophages and dendritic cells. Inhibits signal transduction originating from Toll-like receptor 3 (TLR3). In terms of biological role, component of the viral RNA replication complex that functions in virion assembly and antagonizes the host immune response. Functionally, required cofactor for the serine protease function of NS3. May have membrane-destabilizing activity and form viroporins. Its function is as follows. Displays three enzymatic activities: serine protease, NTPase and RNA helicase. NS3 serine protease, in association with NS2B, performs its autocleavage and cleaves the polyprotein at dibasic sites in the cytoplasm: C-prM, NS2A-NS2B, NS2B-NS3, NS3-NS4A, NS4A-2K and NS4B-NS5. NS3 RNA helicase binds RNA and unwinds dsRNA in the 3' to 5' direction. Regulates the ATPase activity of the NS3 helicase activity. NS4A allows NS3 helicase to conserve energy during unwinding. In terms of biological role, functions as a signal peptide for NS4B and is required for the interferon antagonism activity of the latter. Functionally, induces the formation of ER-derived membrane vesicles where the viral replication takes place. Inhibits interferon (IFN)-induced host STAT1 phosphorylation and nuclear translocation, thereby preventing the establishment of cellular antiviral state by blocking the IFN-alpha/beta pathway. Inhibits STAT2 translocation in the nucleus after IFN-alpha treatment. Its function is as follows. Replicates the viral (+) and (-) genome, and performs the capping of genomes in the cytoplasm. NS5 methylates viral RNA cap at guanine N-7 and ribose 2'-O positions. Besides its role in genome replication, also prevents the establishment of cellular antiviral state by blocking the interferon-alpha/beta (IFN-alpha/beta) signaling pathway. Inhibits host TYK2 and STAT2 phosphorylation, thereby preventing activation of JAK-STAT signaling pathway. This chain is Genome polyprotein, found in Tick-borne encephalitis virus (strain Hypr) (TBEV).